The chain runs to 218 residues: Recombination protein RecR (218 aa).

The segment at 56-71 adopts a C4-type zinc-finger fold; the sequence is CRICCNISREEVCRIC. Positions 79-195 constitute a Toprim domain; that stretch reads GTICVVEEPK…VVSRLASGMP (117 aa).

Belongs to the RecR family.

In terms of biological role, may play a role in DNA repair. It seems to be involved in an RecBC-independent recombinational process of DNA repair. It may act with RecF and RecO. This Corynebacterium glutamicum (strain R) protein is Recombination protein RecR.